A 127-amino-acid polypeptide reads, in one-letter code: Cystatin cpi-1 (127 aa).

Positions 1 to 19 (MFFPIVWLSVLLIISKSFA) are cleaved as a signal peptide. Residues 68 to 72 (QVVAG) carry the Secondary area of contact motif. Cys86 and Cys98 are oxidised to a cystine.

This sequence belongs to the cystatin family.

Its function is as follows. Cysteine protease inhibitor which inhibits members of the peptidase C1 family. Does not inhibit asparaginyl endopeptidase. This chain is Cystatin cpi-1, found in Brugia malayi (Filarial nematode worm).